A 92-amino-acid polypeptide reads, in one-letter code: Putative phosphotransferase enzyme IIB component SgcB (92 aa).

The region spanning Met1–Gln92 is the PTS EIIB type-2 domain. Residue Cys8 is the Phosphocysteine intermediate of the active site.

The protein resides in the cytoplasm. Its function is as follows. The phosphoenolpyruvate-dependent sugar phosphotransferase system (sugar PTS), a major carbohydrate active -transport system, catalyzes the phosphorylation of incoming sugar substrates concomitantly with their translocation across the cell membrane. The polypeptide is Putative phosphotransferase enzyme IIB component SgcB (sgcB) (Escherichia coli (strain K12)).